Here is a 356-residue protein sequence, read N- to C-terminus: uncharacterized protein (356 aa).

Helical transmembrane passes span 2–22, 35–55, 74–94, 99–119, 124–144, and 154–174; these read FEAF…FHRL, AYVT…PIPY, FTNM…EIVV, IMYG…GPFL, VLSL…VALV, and IILI…FVDI. The GGDEF domain maps to 218 to 353; sequence QSIALLLIDI…GRNKVMFNPI (136 aa).

It is found in the cell membrane. This is an uncharacterized protein from Staphylococcus aureus (strain bovine RF122 / ET3-1).